The primary structure comprises 50 residues: Small ribosomal subunit protein uS14 (50 aa).

Positions 15, 18, 33, and 36 each coordinate Zn(2+).

Belongs to the universal ribosomal protein uS14 family. Zinc-binding uS14 subfamily. Part of the 30S ribosomal subunit. Zn(2+) is required as a cofactor.

Binds 16S rRNA, required for the assembly of 30S particles. This chain is Small ribosomal subunit protein uS14, found in Methanosarcina mazei (strain ATCC BAA-159 / DSM 3647 / Goe1 / Go1 / JCM 11833 / OCM 88) (Methanosarcina frisia).